The sequence spans 435 residues: Endosome-associated-trafficking regulator 1 (435 aa).

Phosphoserine is present on residues Ser-18 and Ser-147. Disordered regions lie at residues 136–185 and 225–251; these read ASRH…TGWS and ESLP…PSAD. The segment covering 173–182 has biased composition (acidic residues); sequence LLDEEEDEDT. The tract at residues 173–198 is required for interaction with PTPN13; sequence LLDEEEDEDTGWSGAYLPSAIEQTHP. A compositionally biased stretch (low complexity) spans 240–250; that stretch reads SPASPAGSPSA. Ser-243 and Ser-247 each carry phosphoserine. Positions 261–371 form a coiled coil; that stretch reads DRHLRTLQIS…FQRENEALRC (111 aa).

The protein belongs to the ENTR1 family. Found in a complex with ENTR1, PTPN13 and GIT1. Interacts with PTPN13 (via the FERM domain). Interacts (via N-terminus) with GIT1 (via N- and C-terminus); this interaction is direct. Interacts with NOD2. Interacts (via N-terminus) with IFT88. Interacts with VPS35. In terms of processing, phosphorylated. As to expression, expressed in the colon (at protein level).

It localises to the cytoplasm. The protein resides in the early endosome. It is found in the endosome. Its subcellular location is the recycling endosome. The protein localises to the midbody. It localises to the cytoskeleton. The protein resides in the microtubule organizing center. It is found in the centrosome. Its subcellular location is the cilium basal body. In terms of biological role, endosome-associated protein that plays a role in membrane receptor sorting, cytokinesis and ciliogenesis. Involved in the endosome-to-plasma membrane trafficking and recycling of SNX27-retromer-dependent cargo proteins, such as GLUT1. Involved in the regulation of cytokinesis; the function may involve PTPN13 and GIT1. Plays a role in the formation of cilia. Involved in cargo protein localization, such as PKD2, at primary cilia. Involved in the presentation of the tumor necrosis factor (TNF) receptor TNFRSF1A on the cell surface, and hence in the modulation of the TNF-induced apoptosis. The chain is Endosome-associated-trafficking regulator 1 from Homo sapiens (Human).